The sequence spans 412 residues: Divalent metal cation transporter MntH (412 aa).

Topologically, residues 1-19 are cytoplasmic; it reads MTNYRVESSSGRAARKTRL. The chain crosses the membrane as a helical span at residues 20 to 39; that stretch reads ALMGPAFIAAIGYIDPGNFA. The Periplasmic segment spans residues 40 to 51; the sequence is TNIQAGASFGYQ. A helical transmembrane segment spans residues 52-71; the sequence is LLWVVVWANLMAMLIQILSA. Residues 72–95 are Cytoplasmic-facing; sequence KLGIATGKNLAEQIRDHYPRPVVW. The helical transmembrane segment at 96–118 threads the bilayer; it reads FYWVQAEIIAMATDLAEFIGAAI. Topologically, residues 119-125 are periplasmic; that stretch reads GFKLILG. Residues 126–145 traverse the membrane as a helical segment; the sequence is VSLLQGAVLTGIATFLILML. At 146-155 the chain is on the cytoplasmic side; it reads QRRGQKPLEK. Residues 156-175 form a helical membrane-spanning segment; sequence VIGGLLLFVAAAYIVELIFS. Over 176–196 the chain is Periplasmic; it reads QPNLAQLGKGMVIPSLPTSEA. The chain crosses the membrane as a helical span at residues 197–220; sequence VFLAAGVLGATIMPHVIYLHSSLT. The Cytoplasmic portion of the chain corresponds to 221-238; sequence QHLHGGSRQQRYSATKWD. A helical transmembrane segment spans residues 239–258; it reads VAIAMTIAGFVNLAMMATAA. Over 259–276 the chain is Periplasmic; it reads AAFHFSGHTGVADLDEAY. The chain crosses the membrane as a helical span at residues 277–297; the sequence is LTLQPLLSHAAATVFGLSLVA. Over 298 to 327 the chain is Cytoplasmic; sequence AGLSSTVVGTLAGQVVMQGFIRFHIPLWVR. Residues 328-344 form a helical membrane-spanning segment; sequence RTVTMLPSFIVILMGLD. Residues 345–350 are Periplasmic-facing; the sequence is PTRILV. The helical transmembrane segment at 351–370 threads the bilayer; that stretch reads MSQVLLSFGIALALVPLLIF. Topologically, residues 371–387 are cytoplasmic; the sequence is TSDSKLMGDLVNSKRVK. Residues 388–406 form a helical membrane-spanning segment; the sequence is QTGWVIVVLVVALNIWLLV. The Periplasmic segment spans residues 407-412; the sequence is GTALGL.

It belongs to the NRAMP family.

The protein localises to the cell inner membrane. H(+)-stimulated, divalent metal cation uptake system. This is Divalent metal cation transporter MntH from Escherichia coli O9:H4 (strain HS).